The following is a 93-amino-acid chain: Small ribosomal subunit protein uS19 (93 aa).

It belongs to the universal ribosomal protein uS19 family.

In terms of biological role, protein S19 forms a complex with S13 that binds strongly to the 16S ribosomal RNA. This Mycobacterium marinum (strain ATCC BAA-535 / M) protein is Small ribosomal subunit protein uS19.